A 283-amino-acid polypeptide reads, in one-letter code: Formamidopyrimidine-DNA glycosylase (283 aa).

P2 functions as the Schiff-base intermediate with DNA in the catalytic mechanism. The Proton donor role is filled by E3. K58 acts as the Proton donor; for beta-elimination activity in catalysis. DNA is bound by residues H100, R119, and R162. An FPG-type zinc finger spans residues 247-283 (DVYGREGAPCKGEGCTGQIKRIVQSGRSSFYCAQCQR). Residue R273 is the Proton donor; for delta-elimination activity of the active site.

Belongs to the FPG family. As to quaternary structure, monomer. Zn(2+) serves as cofactor.

The enzyme catalyses Hydrolysis of DNA containing ring-opened 7-methylguanine residues, releasing 2,6-diamino-4-hydroxy-5-(N-methyl)formamidopyrimidine.. It catalyses the reaction 2'-deoxyribonucleotide-(2'-deoxyribose 5'-phosphate)-2'-deoxyribonucleotide-DNA = a 3'-end 2'-deoxyribonucleotide-(2,3-dehydro-2,3-deoxyribose 5'-phosphate)-DNA + a 5'-end 5'-phospho-2'-deoxyribonucleoside-DNA + H(+). Functionally, involved in base excision repair of DNA damaged by oxidation or by mutagenic agents. Acts as a DNA glycosylase that recognizes and removes damaged bases. Has a preference for oxidized purines, such as 7,8-dihydro-8-oxoguanine (8-oxoG). Has AP (apurinic/apyrimidinic) lyase activity and introduces nicks in the DNA strand. Cleaves the DNA backbone by beta-delta elimination to generate a single-strand break at the site of the removed base with both 3'- and 5'-phosphates. This Roseobacter denitrificans (strain ATCC 33942 / OCh 114) (Erythrobacter sp. (strain OCh 114)) protein is Formamidopyrimidine-DNA glycosylase.